The sequence spans 383 residues: 3-phytase (383 aa).

The signal sequence occupies residues 1-26 (MNHSKTLLLTAAAGLMLTCGAVSSQA). Positions 27–29 (KHK) are excised as a propeptide. Positions 30–362 (LSDPYHFTVN…VPWERIADQI (333 aa)) constitute a BPP domain.

The cofactor is Ca(2+).

Its subcellular location is the secreted. It carries out the reaction 1D-myo-inositol hexakisphosphate + H2O = 1D-myo-inositol 1,2,4,5,6-pentakisphosphate + phosphate. Functionally, catalyzes the hydrolysis of inorganic orthophosphate from phytate. Only phytate, ADP, and ATP were hydrolyzed (100, 75, and 50% of the relative activity, respectively). This is 3-phytase (phyC) from Bacillus subtilis.